The primary structure comprises 430 residues: S-adenosylmethionine synthase (430 aa).

H14 is an ATP binding site. D16 contributes to the Mg(2+) binding site. E42 contributes to the K(+) binding site. Residues E55 and Q98 each coordinate L-methionine. The flexible loop stretch occupies residues 98 to 108 (QSPDINRGVER). Residues 164-166 (DAK), 254-255 (KF), D263, 269-270 (RK), A286, and K290 each bind ATP. Position 263 (D263) interacts with L-methionine. Residue K294 participates in L-methionine binding.

Belongs to the AdoMet synthase family. As to quaternary structure, homotetramer; dimer of dimers. Requires Mg(2+) as cofactor. The cofactor is K(+).

It localises to the cytoplasm. The catalysed reaction is L-methionine + ATP + H2O = S-adenosyl-L-methionine + phosphate + diphosphate. It functions in the pathway amino-acid biosynthesis; S-adenosyl-L-methionine biosynthesis; S-adenosyl-L-methionine from L-methionine: step 1/1. In terms of biological role, catalyzes the formation of S-adenosylmethionine (AdoMet) from methionine and ATP. The overall synthetic reaction is composed of two sequential steps, AdoMet formation and the subsequent tripolyphosphate hydrolysis which occurs prior to release of AdoMet from the enzyme. This chain is S-adenosylmethionine synthase, found in Bacteroides thetaiotaomicron (strain ATCC 29148 / DSM 2079 / JCM 5827 / CCUG 10774 / NCTC 10582 / VPI-5482 / E50).